A 181-amino-acid polypeptide reads, in one-letter code: Crossover junction endodeoxyribonuclease RuvC (181 aa).

Catalysis depends on residues Asp7, Glu67, and Asp139. Asp7, Glu67, and Asp139 together coordinate Mg(2+).

Belongs to the RuvC family. In terms of assembly, homodimer which binds Holliday junction (HJ) DNA. The HJ becomes 2-fold symmetrical on binding to RuvC with unstacked arms; it has a different conformation from HJ DNA in complex with RuvA. In the full resolvosome a probable DNA-RuvA(4)-RuvB(12)-RuvC(2) complex forms which resolves the HJ. The cofactor is Mg(2+).

It is found in the cytoplasm. It carries out the reaction Endonucleolytic cleavage at a junction such as a reciprocal single-stranded crossover between two homologous DNA duplexes (Holliday junction).. The RuvA-RuvB-RuvC complex processes Holliday junction (HJ) DNA during genetic recombination and DNA repair. Endonuclease that resolves HJ intermediates. Cleaves cruciform DNA by making single-stranded nicks across the HJ at symmetrical positions within the homologous arms, yielding a 5'-phosphate and a 3'-hydroxyl group; requires a central core of homology in the junction. The consensus cleavage sequence is 5'-(A/T)TT(C/G)-3'. Cleavage occurs on the 3'-side of the TT dinucleotide at the point of strand exchange. HJ branch migration catalyzed by RuvA-RuvB allows RuvC to scan DNA until it finds its consensus sequence, where it cleaves and resolves the cruciform DNA. This Cupriavidus metallidurans (strain ATCC 43123 / DSM 2839 / NBRC 102507 / CH34) (Ralstonia metallidurans) protein is Crossover junction endodeoxyribonuclease RuvC.